A 365-amino-acid chain; its full sequence is tRNA-specific 2-thiouridylase MnmA (365 aa).

ATP-binding positions include 9–16 (AMSGGVDS) and Met-35. Cys-105 acts as the Nucleophile in catalysis. The cysteines at positions 105 and 203 are disulfide-linked. Residue Gly-129 participates in ATP binding. Residues 153–155 (KDQ) form an interaction with tRNA region. Cys-203 serves as the catalytic Cysteine persulfide intermediate. The tract at residues 308–309 (RY) is interaction with tRNA.

The protein belongs to the MnmA/TRMU family.

The protein resides in the cytoplasm. The catalysed reaction is S-sulfanyl-L-cysteinyl-[protein] + uridine(34) in tRNA + AH2 + ATP = 2-thiouridine(34) in tRNA + L-cysteinyl-[protein] + A + AMP + diphosphate + H(+). Catalyzes the 2-thiolation of uridine at the wobble position (U34) of tRNA, leading to the formation of s(2)U34. This is tRNA-specific 2-thiouridylase MnmA from Pelotomaculum thermopropionicum (strain DSM 13744 / JCM 10971 / SI).